A 246-amino-acid chain; its full sequence is Large ribosomal subunit protein uL30-like 1 (246 aa).

At S54 the chain carries Phosphoserine.

This sequence belongs to the universal ribosomal protein uL30 family.

This Pongo abelii (Sumatran orangutan) protein is Large ribosomal subunit protein uL30-like 1 (RPL7L1).